The primary structure comprises 439 residues: Forkhead box protein J1-B (439 aa).

The fork-head DNA-binding region spans 124-218 (KPPYSYATLI…MNGAMKKRRL (95 aa)).

It belongs to the FOXJ1 family.

It localises to the nucleus. In terms of biological role, key transcription factor required for motile ciliogenesis. Activates genes essential for motile cilia formation and function. In Xenopus laevis (African clawed frog), this protein is Forkhead box protein J1-B (foxj1-b).